Reading from the N-terminus, the 147-residue chain is Hordoindoline-B1 (147 aa).

The N-terminal stretch at 1–19 (MKTLFLLAILALVASTTFA) is a signal peptide. A propeptide spanning residues 20–28 (QYSVGGGYN) is cleaved from the precursor.

Post-translationally, five disulfide bonds are present. Found in endosperm and aleurone layer of developing kernels, but not in the embryo.

It is found in the membrane. It localises to the secreted. The protein localises to the extracellular space. Its function is as follows. Acts as a membranotoxin, probably through its antibacterial and antifungal activities, contributing to the defense mechanism of the plant against predators. Forms monovalent cation-selective ion channels in membranes. Contributes to grain texture and hardness. This chain is Hordoindoline-B1 (HINB-1), found in Hordeum vulgare (Barley).